A 408-amino-acid chain; its full sequence is Sporulation integral membrane protein YlbJ (408 aa).

The next 8 membrane-spanning stretches (helical) occupy residues 6–26, 43–63, 81–101, 131–151, 214–234, 294–314, 324–344, and 377–397; these read INTL…ISHP, VVFP…GFGI, VPGV…PAGA, LFIF…GILL, VTSS…FSVF, IIVS…VAGI, PFFI…MLLW, and LLVQ…IIIF.

The protein localises to the cell membrane. In terms of biological role, required for spore cortex formation. This chain is Sporulation integral membrane protein YlbJ (ylbJ), found in Bacillus subtilis (strain 168).